A 902-amino-acid polypeptide reads, in one-letter code: Leucine-rich repeat-containing G-protein coupled receptor 5A (902 aa).

Positions methionine 1–serine 22 are cleaved as a signal peptide. The Extracellular portion of the chain corresponds to alanine 23–arginine 557. 2 disulfides stabilise this stretch: cysteine 32–cysteine 38 and cysteine 36–cysteine 49. The LRRNT domain occupies cysteine 32 to isoleucine 61. 17 LRR repeats span residues aspartate 41–isoleucine 61, serine 62–asparagine 85, leucine 86–glycine 109, glycine 111–asparagine 133, leucine 134–glycine 157, phenylalanine 159–serine 181, leucine 182–asparagine 205, serine 207–glycine 229, leucine 230–leucine 253, lysine 254–glycine 276, proline 278–histidine 300, leucine 301–threonine 324, threonine 325–glutamine 347, leucine 348–arginine 372, glutamine 374–glutamine 393, leucine 394–serine 417, and leucine 418–glycine 441. Residues asparagine 60 and asparagine 74 are each glycosylated (N-linked (GlcNAc...) asparagine). Asparagine 205 carries an N-linked (GlcNAc...) asparagine glycan. Cysteines 345 and 370 form a disulfide. Cysteine 476 and cysteine 537 are oxidised to a cystine. Asparagine 496 carries N-linked (GlcNAc...) asparagine glycosylation. A helical transmembrane segment spans residues isoleucine 558–valine 578. Residues phenylalanine 579 to lysine 589 lie on the Cytoplasmic side of the membrane. The chain crosses the membrane as a helical span at residues leucine 590 to alanine 610. One copy of the LRR 18 repeat lies at isoleucine 598–asparagine 619. Over threonine 611–glutamine 634 the chain is Extracellular. Cysteines 633 and 708 form a disulfide. The helical transmembrane segment at isoleucine 635–alanine 655 threads the bilayer. Residues leucine 656–lysine 678 are Cytoplasmic-facing. The chain crosses the membrane as a helical span at residues leucine 679–glycine 699. The Extracellular portion of the chain corresponds to serine 700–serine 718. The chain crosses the membrane as a helical span at residues methionine 719–alanine 739. Residues tyrosine 740–histidine 763 are Cytoplasmic-facing. A helical membrane pass occupies residues isoleucine 764–serine 784. Residues serine 785–lysine 798 lie on the Extracellular side of the membrane. Asparagine 788 and asparagine 797 each carry an N-linked (GlcNAc...) asparagine glycan. The chain crosses the membrane as a helical span at residues serine 799–phenylalanine 819. Residues asparagine 820–histidine 902 are Cytoplasmic-facing.

The protein belongs to the G-protein coupled receptor 1 family. As to expression, expressed in the developing epithelial stem cells of the intestine.

Its subcellular location is the cell membrane. It localises to the golgi apparatus. The protein resides in the trans-Golgi network membrane. Its function is as follows. Receptor for R-spondins that potentiates the canonical Wnt signaling pathway and acts as a stem cell marker of the intestinal epithelium and the hair follicle. Upon binding to R-spondins (RSPO1, RSPO2, RSPO3 or RSPO4), associates with phosphorylated LRP6 and frizzled receptors that are activated by extracellular Wnt receptors, triggering the canonical Wnt signaling pathway to increase expression of target genes. In contrast to classical G-protein coupled receptors, does not activate heterotrimeric G-proteins to transduce the signal. Involved in the development and/or maintenance of the adult intestinal stem cells during postembryonic development. This is Leucine-rich repeat-containing G-protein coupled receptor 5A (lgr5-a) from Xenopus laevis (African clawed frog).